The following is a 456-amino-acid chain: Bifunctional protein GlmU (456 aa).

The segment at 1-229 (MLNNAMSVVI…LSEVEGVNNR (229 aa)) is pyrophosphorylase. UDP-N-acetyl-alpha-D-glucosamine-binding positions include 11–14 (LAAG), Lys-25, Gln-76, 81–82 (GT), 103–105 (YGD), Gly-140, Glu-154, Asn-169, and Asn-227. Residue Asp-105 participates in Mg(2+) binding. Residue Asn-227 participates in Mg(2+) binding. The tract at residues 230 to 250 (LQLSRLERVYQSEQAEKLLLA) is linker. Positions 251 to 456 (GVMLRDPARF…EGWRRPVKKK (206 aa)) are N-acetyltransferase. The UDP-N-acetyl-alpha-D-glucosamine site is built by Arg-333 and Lys-351. His-363 functions as the Proton acceptor in the catalytic mechanism. UDP-N-acetyl-alpha-D-glucosamine is bound by residues Tyr-366 and Asn-377. Acetyl-CoA contacts are provided by residues Ala-380, 386–387 (NY), Ser-405, Ala-423, and Arg-440.

This sequence in the N-terminal section; belongs to the N-acetylglucosamine-1-phosphate uridyltransferase family. The protein in the C-terminal section; belongs to the transferase hexapeptide repeat family. As to quaternary structure, homotrimer. Mg(2+) is required as a cofactor.

Its subcellular location is the cytoplasm. It carries out the reaction alpha-D-glucosamine 1-phosphate + acetyl-CoA = N-acetyl-alpha-D-glucosamine 1-phosphate + CoA + H(+). The enzyme catalyses N-acetyl-alpha-D-glucosamine 1-phosphate + UTP + H(+) = UDP-N-acetyl-alpha-D-glucosamine + diphosphate. The protein operates within nucleotide-sugar biosynthesis; UDP-N-acetyl-alpha-D-glucosamine biosynthesis; N-acetyl-alpha-D-glucosamine 1-phosphate from alpha-D-glucosamine 6-phosphate (route II): step 2/2. It functions in the pathway nucleotide-sugar biosynthesis; UDP-N-acetyl-alpha-D-glucosamine biosynthesis; UDP-N-acetyl-alpha-D-glucosamine from N-acetyl-alpha-D-glucosamine 1-phosphate: step 1/1. It participates in bacterial outer membrane biogenesis; LPS lipid A biosynthesis. Its function is as follows. Catalyzes the last two sequential reactions in the de novo biosynthetic pathway for UDP-N-acetylglucosamine (UDP-GlcNAc). The C-terminal domain catalyzes the transfer of acetyl group from acetyl coenzyme A to glucosamine-1-phosphate (GlcN-1-P) to produce N-acetylglucosamine-1-phosphate (GlcNAc-1-P), which is converted into UDP-GlcNAc by the transfer of uridine 5-monophosphate (from uridine 5-triphosphate), a reaction catalyzed by the N-terminal domain. The sequence is that of Bifunctional protein GlmU from Escherichia coli O139:H28 (strain E24377A / ETEC).